The following is a 298-amino-acid chain: Probable pyridoxal 5'-phosphate synthase subunit SNZ3 (298 aa).

Asp21 serves as a coordination point for D-ribose 5-phosphate. The active-site Schiff-base intermediate with D-ribose 5-phosphate is the Lys78. D-ribose 5-phosphate-binding positions include Gly150, Gly213, and 234–235 (GS).

It belongs to the PdxS/SNZ family. In terms of assembly, homohexamer. Interacts with THI11.

It carries out the reaction aldehydo-D-ribose 5-phosphate + D-glyceraldehyde 3-phosphate + L-glutamine = pyridoxal 5'-phosphate + L-glutamate + phosphate + 3 H2O + H(+). The protein operates within cofactor biosynthesis; pyridoxal 5'-phosphate biosynthesis. In terms of biological role, catalyzes the formation of pyridoxal 5'-phosphate from ribose 5-phosphate (RBP), glyceraldehyde 3-phosphate (G3P) and ammonia. The ammonia is provided by a SNO isoform. Can also use ribulose 5-phosphate and dihydroxyacetone phosphate as substrates, resulting from enzyme-catalyzed isomerization of RBP and G3P, respectively. This chain is Probable pyridoxal 5'-phosphate synthase subunit SNZ3 (SNZ3), found in Saccharomyces cerevisiae (strain ATCC 204508 / S288c) (Baker's yeast).